The sequence spans 342 residues: Tetraacyldisaccharide 4'-kinase (342 aa).

Residue threonine 68–threonine 75 participates in ATP binding.

Belongs to the LpxK family.

It catalyses the reaction a lipid A disaccharide + ATP = a lipid IVA + ADP + H(+). It participates in glycolipid biosynthesis; lipid IV(A) biosynthesis; lipid IV(A) from (3R)-3-hydroxytetradecanoyl-[acyl-carrier-protein] and UDP-N-acetyl-alpha-D-glucosamine: step 6/6. In terms of biological role, transfers the gamma-phosphate of ATP to the 4'-position of a tetraacyldisaccharide 1-phosphate intermediate (termed DS-1-P) to form tetraacyldisaccharide 1,4'-bis-phosphate (lipid IVA). The protein is Tetraacyldisaccharide 4'-kinase of Burkholderia pseudomallei (strain K96243).